The sequence spans 447 residues: UDP-N-acetylglucosamine 1-carboxyvinyltransferase (447 aa).

27-28 (KN) is a binding site for phosphoenolpyruvate. Position 97 (Arg-97) interacts with UDP-N-acetyl-alpha-D-glucosamine. Cys-121 (proton donor) is an active-site residue. 2-(S-cysteinyl)pyruvic acid O-phosphothioketal is present on Cys-121. Residues 126 to 130 (RPVDL), Asp-314, and Val-336 each bind UDP-N-acetyl-alpha-D-glucosamine.

Belongs to the EPSP synthase family. MurA subfamily.

The protein resides in the cytoplasm. It carries out the reaction phosphoenolpyruvate + UDP-N-acetyl-alpha-D-glucosamine = UDP-N-acetyl-3-O-(1-carboxyvinyl)-alpha-D-glucosamine + phosphate. Its pathway is cell wall biogenesis; peptidoglycan biosynthesis. Cell wall formation. Adds enolpyruvyl to UDP-N-acetylglucosamine. The chain is UDP-N-acetylglucosamine 1-carboxyvinyltransferase from Nostoc sp. (strain PCC 7120 / SAG 25.82 / UTEX 2576).